The sequence spans 250 residues: Insertion sequence IS232 putative ATP-binding protein (250 aa).

108–115 (GPSGVGKT) contacts ATP.

This sequence belongs to the IS21/IS1162 putative ATP-binding protein family.

The polypeptide is Insertion sequence IS232 putative ATP-binding protein (Bacillus thuringiensis subsp. berliner).